Reading from the N-terminus, the 472-residue chain is Velvet complex subunit umv2 (472 aa).

Composition is skewed to basic and acidic residues over residues 1–10, 29–59, 67–80, and 89–105; these read MSRSDTDGRD, SQRR…DSHG, YSRD…HRGD, and SYQR…EQER. Disordered regions lie at residues 1-121, 281-327, and 433-472; these read MSRS…PLEA, CDDG…QFGG, and SQGI…EDDE. Positions 106–116 are enriched in low complexity; it reads SYGGASASRSS. Positions 158-441 constitute a Velvet domain; the sequence is ENGRRYRLVV…ASQGIKIPVR (284 aa). Over residues 286 to 298 the composition is skewed to polar residues; sequence RSSTHPQHASEST. Over residues 456–466 the composition is skewed to gly residues; that stretch reads DGMGDYDGASG.

Belongs to the velvet family. VelB subfamily. Component of the heterotrimeric velvet complex composed of laeA, veA and velB; VeA acting as a bridging protein between laeA and velB. Forms a heterodimeric complex with vosA; the formation of the velB-vosA complex is light-dependent.

Its subcellular location is the nucleus. It localises to the cytoplasm. Its function is as follows. Component of the velvet transcription factor complex that controls sexual/asexual developmental ratio in response to light, promoting sexual development in the darkness while stimulating asexual sporulation under illumination. The velvet complex acts as a global regulator for secondary metabolite gene expression. Component of the velB-VosA heterodimeric complex that plays a dual role in activating genes associated with spore maturation and repressing certain development-associated genes. The velB-VosA complex binds DNA through the DNA-binding domain of vosA that recognizes an 11-nucleotide consensus sequence 5'-CTGGCCGCGGC-3' consisting of two motifs in the promoters of key developmental regulatory genes. Required for full virulence on seedlings. This is Velvet complex subunit umv2 from Mycosarcoma maydis (Corn smut fungus).